The following is a 395-amino-acid chain: tRNA-specific 2-thiouridylase MnmA (395 aa).

Residues 7–14 (GLSGGVDS) and Met33 each bind ATP. Residues 95–97 (NPD) form an interaction with target base in tRNA region. Cys100 acts as the Nucleophile in catalysis. Residues Cys100 and Cys200 are joined by a disulfide bond. Gly124 serves as a coordination point for ATP. Positions 150–152 (KDQ) are interaction with tRNA. Cys200 functions as the Cysteine persulfide intermediate in the catalytic mechanism. The tract at residues 346-347 (RY) is interaction with tRNA.

Belongs to the MnmA/TRMU family.

It is found in the cytoplasm. It catalyses the reaction S-sulfanyl-L-cysteinyl-[protein] + uridine(34) in tRNA + AH2 + ATP = 2-thiouridine(34) in tRNA + L-cysteinyl-[protein] + A + AMP + diphosphate + H(+). Its function is as follows. Catalyzes the 2-thiolation of uridine at the wobble position (U34) of tRNA, leading to the formation of s(2)U34. The chain is tRNA-specific 2-thiouridylase MnmA from Flavobacterium johnsoniae (strain ATCC 17061 / DSM 2064 / JCM 8514 / BCRC 14874 / CCUG 350202 / NBRC 14942 / NCIMB 11054 / UW101) (Cytophaga johnsonae).